A 58-amino-acid chain; its full sequence is Ribosome biogenesis protein Nop10 (58 aa).

It belongs to the NOP10 family.

Its function is as follows. Involved in ribosome biogenesis; more specifically in 18S rRNA pseudouridylation and in cleavage of pre-rRNA. The sequence is that of Ribosome biogenesis protein Nop10 from Methanobrevibacter smithii (strain ATCC 35061 / DSM 861 / OCM 144 / PS).